Consider the following 296-residue polypeptide: Enoyl-CoA hydratase domain-containing protein 2, mitochondrial (296 aa).

Position 101 is an N6-acetyllysine; alternate (lysine 101). At lysine 101 the chain carries N6-succinyllysine; alternate.

It belongs to the enoyl-CoA hydratase/isomerase family.

The protein resides in the mitochondrion. The polypeptide is Enoyl-CoA hydratase domain-containing protein 2, mitochondrial (ECHDC2) (Bos taurus (Bovine)).